Consider the following 539-residue polypeptide: Inosine-5'-monophosphate dehydrogenase (539 aa).

CBS domains lie at 140 to 196 and 200 to 257; these read IIVN…DMPI and MTRE…PRAC. NAD(+) contacts are provided by residues aspartate 292 and 343–345; that span reads GIG. Residues glycine 345 and glycine 347 each contribute to the K(+) site. IMP is bound at residue serine 348. Residue cysteine 350 coordinates K(+). Cysteine 350 acts as the Thioimidate intermediate in catalysis. IMP contacts are provided by residues 383-385, 406-407, and 430-434; these read DGG, GS, and YRGMG. The active-site Proton acceptor is the arginine 446. Glutamate 460 serves as a coordination point for IMP. 2 residues coordinate K(+): glutamate 514 and histidine 516. The interval 517 to 539 is disordered; that stretch reads PHDIAITQEAPNYSPDVHSGDAG.

It belongs to the IMPDH/GMPR family. Homotetramer. Requires K(+) as cofactor.

It carries out the reaction IMP + NAD(+) + H2O = XMP + NADH + H(+). Its pathway is purine metabolism; XMP biosynthesis via de novo pathway; XMP from IMP: step 1/1. With respect to regulation, mycophenolic acid (MPA) is a non-competitive inhibitor that prevents formation of the closed enzyme conformation by binding to the same site as the amobile flap. In contrast, mizoribine monophosphate (MZP) is a competitive inhibitor that induces the closed conformation. MPA is a potent inhibitor of mammalian IMPDHs but a poor inhibitor of the bacterial enzymes. MZP is a more potent inhibitor of bacterial IMPDH. Catalyzes the conversion of inosine 5'-phosphate (IMP) to xanthosine 5'-phosphate (XMP), the first committed and rate-limiting step in the de novo synthesis of guanine nucleotides, and therefore plays an important role in the regulation of cell growth. The sequence is that of Inosine-5'-monophosphate dehydrogenase from Rhodopirellula baltica (strain DSM 10527 / NCIMB 13988 / SH1).